The following is a 696-amino-acid chain: Chitin synthase regulator SKT5 (696 aa).

2 disordered regions span residues 37–67 and 90–145; these read GQDF…SANQ and QEED…IKKR. Positions 41-53 are enriched in basic and acidic residues; the sequence is SDNKENRENRDNE. Over residues 104–126 the composition is skewed to low complexity; it reads LNNSNNTSLSSLGSTPTNSPSPG. The span at 129-139 shows a compositional bias: polar residues; that stretch reads RQTNSSTSLTK. Residue Ser-148 is modified to Phosphoserine. 7 Sel1-like repeats span residues 271 to 306, 307 to 342, 343 to 382, 386 to 423, 424 to 460, 461 to 498, and 499 to 534; these read SDAQ…KHGH, IESA…SRNH, PSAM…ARAN, AAAP…SLGH, VPSA…LKGD, SVAM…NAGL, and PKAQ…GNED. Phosphoserine occurs at positions 561 and 563. Thr-564 carries the phosphothreonine modification. Polar residues-rich tracts occupy residues 576–593, 605–634, and 651–661; these read SNVG…TFFT, LQIN…SSAK, and VSLSNMGSSNM. Residues 576–696 are disordered; sequence SNVGSNSRVS…GKKKKDCVIM (121 aa). Positions 662-675 are enriched in basic and acidic residues; the sequence is IRKDFPAVKTESKK. A compositionally biased stretch (basic residues) spans 680 to 696; that stretch reads KNKKDKQGKKKKDCVIM. The residue at position 693 (Cys-693) is a Cysteine methyl ester. Cys-693 carries the S-farnesyl cysteine lipid modification. A propeptide spans 694–696 (removed in mature form); that stretch reads VIM.

The protein belongs to the SKT5 family. In terms of assembly, may interact with CHS3 and seems to be an adapter (along with BNI4) to link CHS3 to septins. Farnesylation is required for chitin synthase CHS3 activity but is not required for SKT5 membrane association.

Its subcellular location is the cell membrane. Functionally, activator of the chitin synthase CHS3 which polymerizes chitin, a structural polymer of the fungal cell wall. This is Chitin synthase regulator SKT5 from Saccharomyces cerevisiae (strain ATCC 204508 / S288c) (Baker's yeast).